The sequence spans 348 residues: Uroporphyrinogen decarboxylase (348 aa).

Substrate-binding positions include 27–31 (RQAGR), phenylalanine 46, aspartate 76, tyrosine 152, serine 207, and histidine 320.

It belongs to the uroporphyrinogen decarboxylase family. Homodimer.

Its subcellular location is the cytoplasm. It catalyses the reaction uroporphyrinogen III + 4 H(+) = coproporphyrinogen III + 4 CO2. The protein operates within porphyrin-containing compound metabolism; protoporphyrin-IX biosynthesis; coproporphyrinogen-III from 5-aminolevulinate: step 4/4. Catalyzes the decarboxylation of four acetate groups of uroporphyrinogen-III to yield coproporphyrinogen-III. The sequence is that of Uroporphyrinogen decarboxylase from Bacillus anthracis.